The primary structure comprises 327 residues: Biotin synthase (327 aa).

One can recognise a Radical SAM core domain in the interval 49–282; it reads FNKEKIDLCS…KKVIRLCGGR (234 aa). [4Fe-4S] cluster is bound by residues Cys-67, Cys-71, and Cys-74. The [2Fe-2S] cluster site is built by Ser-110, Cys-142, Cys-201, and Arg-277.

It belongs to the radical SAM superfamily. Biotin synthase family. Homodimer. [4Fe-4S] cluster is required as a cofactor. It depends on [2Fe-2S] cluster as a cofactor.

The enzyme catalyses (4R,5S)-dethiobiotin + (sulfur carrier)-SH + 2 reduced [2Fe-2S]-[ferredoxin] + 2 S-adenosyl-L-methionine = (sulfur carrier)-H + biotin + 2 5'-deoxyadenosine + 2 L-methionine + 2 oxidized [2Fe-2S]-[ferredoxin]. It participates in cofactor biosynthesis; biotin biosynthesis; biotin from 7,8-diaminononanoate: step 2/2. In terms of biological role, catalyzes the conversion of dethiobiotin (DTB) to biotin by the insertion of a sulfur atom into dethiobiotin via a radical-based mechanism. The chain is Biotin synthase from Methanococcus maripaludis (strain C7 / ATCC BAA-1331).